Reading from the N-terminus, the 449-residue chain is Elongation factor 1-alpha (449 aa).

The tr-type G domain maps to 5 to 234 (KQHVSIVVIG…DNCDPPKRPV (230 aa)). The G1 stretch occupies residues 14–21 (GHVDSGKS). 14 to 21 (GHVDSGKS) provides a ligand contact to GTP. At Lys55 the chain carries N6,N6-dimethyllysine. The interval 70–74 (GITID) is G2. Residue Lys79 is modified to N6,N6,N6-trimethyllysine. The G3 stretch occupies residues 91-94 (DAPG). Residues 91–95 (DAPGH) and 153–156 (NKMD) each bind GTP. Residues 153 to 156 (NKMD) form a G4 region. At Lys187 the chain carries N6,N6,N6-trimethyllysine. Positions 194–196 (SGW) are G5. Lys265 carries the post-translational modification N6-methyllysine. Lys310 and Lys400 each carry N6,N6,N6-trimethyllysine.

It belongs to the TRAFAC class translation factor GTPase superfamily. Classic translation factor GTPase family. EF-Tu/EF-1A subfamily.

It is found in the cytoplasm. Its function is as follows. This protein promotes the GTP-dependent binding of aminoacyl-tRNA to the A-site of ribosomes during protein biosynthesis. This is Elongation factor 1-alpha from Pyropia yezoensis (Susabi-nori).